The following is a 588-amino-acid chain: Adenine deaminase (588 aa).

It belongs to the metallo-dependent hydrolases superfamily. Adenine deaminase family. In terms of assembly, homodimer. It depends on Mn(2+) as a cofactor.

It catalyses the reaction adenine + H2O + H(+) = hypoxanthine + NH4(+). The chain is Adenine deaminase from Escherichia coli (strain K12 / DH10B).